The following is a 66-amino-acid chain: Large ribosomal subunit protein bL31 (66 aa).

Residues Cys-16, Cys-18, Cys-36, and Cys-39 each contribute to the Zn(2+) site.

This sequence belongs to the bacterial ribosomal protein bL31 family. Type A subfamily. In terms of assembly, part of the 50S ribosomal subunit. Zn(2+) serves as cofactor.

Binds the 23S rRNA. In Geobacter metallireducens (strain ATCC 53774 / DSM 7210 / GS-15), this protein is Large ribosomal subunit protein bL31.